The following is a 266-amino-acid chain: Uridylate kinase (266 aa).

Position 26–29 (K26–G29) interacts with ATP. G67 lines the UMP pocket. Residues G68 and R72 each coordinate ATP. UMP contacts are provided by residues D87 and L148–T155. Residues Y181 and D184 each coordinate ATP.

It belongs to the UMP kinase family. As to quaternary structure, homohexamer.

The protein resides in the cytoplasm. It catalyses the reaction UMP + ATP = UDP + ADP. It functions in the pathway pyrimidine metabolism; CTP biosynthesis via de novo pathway; UDP from UMP (UMPK route): step 1/1. Its activity is regulated as follows. Inhibited by UTP. Its function is as follows. Catalyzes the reversible phosphorylation of UMP to UDP. The polypeptide is Uridylate kinase (Acidothermus cellulolyticus (strain ATCC 43068 / DSM 8971 / 11B)).